Reading from the N-terminus, the 501-residue chain is Dye-decolorizing peroxidase (501 aa).

Residues 1–21 (MRLSPSFLSLALVIFVGEVVA) form the signal peptide. Positions 22–60 (RNVVARASNPASVTGTRKVSLLKNVAGLPAVPTAQQVAV) are excised as a propeptide. The active-site Proton acceptor is Asp-228. N-linked (GlcNAc...) asparagine glycosylation is present at Asn-352. His-367 is a binding site for heme. N-linked (GlcNAc...) asparagine glycosylation is present at Asn-403.

The protein belongs to the DyP-type peroxidase family. Heme b serves as cofactor.

The protein localises to the secreted. The catalysed reaction is Reactive Blue 5 + 2 H2O2 = 2,2'-disulfonyl azobenzene + 3-[(4-amino-6-chloro-1,3,5-triazin-2-yl)amino]benzenesulfonate + phthalate + 2 H2O + 2 H(+). The enzyme catalyses 2 a phenolic donor + H2O2 = 2 a phenolic radical donor + 2 H2O. Functionally, manganese-independent peroxidase that is able to convert a large number of compounds, but its physiological substrate is not known. In addition to classic peroxidase substrates (e.g. 2,6-dimethoxyphenol), oxidizes dyes such as Reactive Blue 5 and Reactive Black 5. The protein is Dye-decolorizing peroxidase of Exidia glandulosa (Black witch's butter).